Here is a 325-residue protein sequence, read N- to C-terminus: Geranylgeranyl transferase type-2 subunit beta (325 aa).

PFTB repeat units lie at residues Lys-9–Asp-50, Lys-57–Asp-99, Lys-109–Gly-150, Val-157–Asn-198, Leu-208–Gly-249, and Tyr-256–Gly-298. Geranylgeranyl diphosphate contacts are provided by residues His-183–Ala-185 and Arg-228–Trp-240. Zn(2+)-binding residues include Asp-234, Cys-236, and His-286.

Belongs to the protein prenyltransferase subunit beta family. Heterodimer of an alpha and a beta subunit. Zn(2+) serves as cofactor.

It catalyses the reaction geranylgeranyl diphosphate + L-cysteinyl-[protein] = S-geranylgeranyl-L-cysteinyl-[protein] + diphosphate. Catalyzes the transfer of a geranyl-geranyl moiety from geranyl-geranyl pyrophosphate to proteins having the C-terminal -XCC or -XCXC, where both cysteines may become modified. Acts on YPT1 and SEC4. This is Geranylgeranyl transferase type-2 subunit beta (BET2) from Saccharomyces cerevisiae (strain ATCC 204508 / S288c) (Baker's yeast).